The primary structure comprises 20 residues: Beta-fibrinogenase jerdofibrase (20 aa).

A Peptidase S1 domain is found at 1 to 20 (VIGGDECNINEHPFLVLVYY).

Belongs to the peptidase S1 family. Snake venom subfamily. In terms of assembly, monomer. In terms of tissue distribution, expressed by the venom gland.

Its subcellular location is the secreted. Its activity is regulated as follows. Inhibited by PMSF and soybean trypsin inhibitor. Partially inhibited by DTT and cysteine. Not affected by EDTA. Its function is as follows. Fibrin(ogen)olytic serine protease degrades Bbeta-chain of human fibrinogen (FGB) and shows a lower activity on Aa-chain (FGA). Also degrades fibrin directly. Releases fibrinopeptide B and a small amount of fibrinopeptide A. Has also be shown to catalyze the hydrolysis of some chromogenic substrates such as S2238, S2160, S2302 and S2251. The protein is Beta-fibrinogenase jerdofibrase of Protobothrops jerdonii (Jerdon's pitviper).